Consider the following 612-residue polypeptide: Glutamine--fructose-6-phosphate aminotransferase [isomerizing] (612 aa).

The Nucleophile; for GATase activity role is filled by cysteine 2. The Glutamine amidotransferase type-2 domain maps to 2-221 (CGIVGIVSQR…NGDIAEITNS (220 aa)). 2 SIS domains span residues 289–429 (FNKT…IRKI) and 461–602 (LVKN…VDHP). Residue lysine 607 is the For Fru-6P isomerization activity of the active site.

In terms of assembly, homodimer.

It is found in the cytoplasm. The catalysed reaction is D-fructose 6-phosphate + L-glutamine = D-glucosamine 6-phosphate + L-glutamate. In terms of biological role, catalyzes the first step in hexosamine metabolism, converting fructose-6P into glucosamine-6P using glutamine as a nitrogen source. This is Glutamine--fructose-6-phosphate aminotransferase [isomerizing] from Wigglesworthia glossinidia brevipalpis.